The sequence spans 386 residues: Lycopene beta-cyclase (386 aa).

4-34 (DVLLAGAGLANGLIALALRAARPDLRVLLLD) is an NAD(+) binding site.

This sequence belongs to the lycopene cyclase family. It depends on FAD as a cofactor.

It catalyses the reaction a carotenoid psi-end group = a carotenoid beta-end derivative. The catalysed reaction is all-trans-lycopene = gamma-carotene. The enzyme catalyses gamma-carotene = all-trans-beta-carotene. It functions in the pathway carotenoid biosynthesis; astaxanthin biosynthesis. In terms of biological role, catalyzes the double cyclization reaction which converts lycopene to beta-carotene. The polypeptide is Lycopene beta-cyclase (Paracoccus sp. (strain N81106 / MBIC 01143) (Agrobacterium aurantiacum)).